Consider the following 459-residue polypeptide: MMEMPIDNLWSQVLERLQIELSRPTFETWIKTANAERLENNCLVIITPNPFARNWLQKYYISTIANVVQSILGHPVEIYITVAKGEEFEEIGGGGEWELPTTNIINETPNQNRQPNTELNAKYVFSRFVVGANNRMAHAASLAVAESPGREFNPLFLCGGVGLGKTHLMQAIGHYRWEICPNSKIFYVSTEQFTNDLITAIRNDSMQSFREHYRAADVLLVDDIQFIEGKEYTQEEFFHTFNTLHEAGKQVVIASDRPPNQIPSLQERLCSRFSMGLIADIQAPDLETRMAILQKKSEYEKIRLPRDVIEYIATNFTSNIRELEGALTRALAYISIWGLPMTVANLAPVLVTPMEKIEATPEAILTVIADNFDISIEDLKSNSRRREISWARQIGMYLMRQHTDLSFPRIGEEFGGKDHTTVLYSCDKIAQLVESDRGLSQTLRQLSDRIKMNSRSRKP.

The tract at residues 1 to 74 (MMEMPIDNLW…ANVVQSILGH (74 aa)) is domain I, interacts with DnaA modulators. A domain II region spans residues 74–117 (HPVEIYITVAKGEEFEEIGGGGEWELPTTNIINETPNQNRQPNT). The segment at 118–334 (ELNAKYVFSR…GALTRALAYI (217 aa)) is domain III, AAA+ region. 4 residues coordinate ATP: glycine 162, glycine 164, lysine 165, and threonine 166. Residues 335-459 (SIWGLPMTVA…IKMNSRSRKP (125 aa)) are domain IV, binds dsDNA.

Belongs to the DnaA family. In terms of assembly, oligomerizes as a right-handed, spiral filament on DNA at oriC.

The protein localises to the cytoplasm. Plays an essential role in the initiation and regulation of chromosomal replication. ATP-DnaA binds to the origin of replication (oriC) to initiate formation of the DNA replication initiation complex once per cell cycle. Binds the DnaA box (a 9 base pair repeat at the origin) and separates the double-stranded (ds)DNA. Forms a right-handed helical filament on oriC DNA; dsDNA binds to the exterior of the filament while single-stranded (ss)DNA is stabiized in the filament's interior. The ATP-DnaA-oriC complex binds and stabilizes one strand of the AT-rich DNA unwinding element (DUE), permitting loading of DNA polymerase. After initiation quickly degrades to an ADP-DnaA complex that is not apt for DNA replication. Binds acidic phospholipids. The sequence is that of Chromosomal replication initiator protein DnaA from Nostoc sp. (strain PCC 7120 / SAG 25.82 / UTEX 2576).